Consider the following 259-residue polypeptide: Glycerol-3-phosphate acyltransferase (259 aa).

The next 7 membrane-spanning stretches (helical) occupy residues 11–31, 62–82, 93–112, 124–144, 152–172, 188–208, and 211–231; these read IILASVVGYFLGSISWSIIIV, LVVAFLDALKVIFTSIIAILL, TSYFIPCIFALIGHCFPIYY, LGLLFVVNILYLIIFLIVWFI, VSVASIFSAFFVLIIMWIPYL, FSVAWKNYILFSLLNSFHYWF, and IWASGMLEGNIIVLIGGLILG.

The protein belongs to the PlsY family. As to quaternary structure, probably interacts with PlsX.

It is found in the cell membrane. It catalyses the reaction an acyl phosphate + sn-glycerol 3-phosphate = a 1-acyl-sn-glycero-3-phosphate + phosphate. Its pathway is lipid metabolism; phospholipid metabolism. Functionally, catalyzes the transfer of an acyl group from acyl-phosphate (acyl-PO(4)) to glycerol-3-phosphate (G3P) to form lysophosphatidic acid (LPA). This enzyme utilizes acyl-phosphate as fatty acyl donor, but not acyl-CoA or acyl-ACP. The polypeptide is Glycerol-3-phosphate acyltransferase (Mycoplasma capricolum subsp. capricolum (strain California kid / ATCC 27343 / NCTC 10154)).